A 318-amino-acid polypeptide reads, in one-letter code: Methionyl-tRNA formyltransferase (318 aa).

(6S)-5,6,7,8-tetrahydrofolate is bound at residue 112-115; that stretch reads SILP.

It belongs to the Fmt family.

It carries out the reaction L-methionyl-tRNA(fMet) + (6R)-10-formyltetrahydrofolate = N-formyl-L-methionyl-tRNA(fMet) + (6S)-5,6,7,8-tetrahydrofolate + H(+). Functionally, attaches a formyl group to the free amino group of methionyl-tRNA(fMet). The formyl group appears to play a dual role in the initiator identity of N-formylmethionyl-tRNA by promoting its recognition by IF2 and preventing the misappropriation of this tRNA by the elongation apparatus. The polypeptide is Methionyl-tRNA formyltransferase (Shewanella putrefaciens (strain CN-32 / ATCC BAA-453)).